Here is a 475-residue protein sequence, read N- to C-terminus: Ribulose bisphosphate carboxylase large chain (475 aa).

The propeptide occupies 1–2; it reads MS. P3 carries the N-acetylproline modification. Position 14 is an N6,N6,N6-trimethyllysine (K14). The substrate site is built by N123 and T173. K175 serves as the catalytic Proton acceptor. K177 serves as a coordination point for substrate. Mg(2+) contacts are provided by K201, D203, and E204. Residue K201 is modified to N6-carboxylysine. H294 serves as the catalytic Proton acceptor. R295, H327, and S379 together coordinate substrate.

The protein belongs to the RuBisCO large chain family. Type I subfamily. As to quaternary structure, heterohexadecamer of 8 large chains and 8 small chains; disulfide-linked. The disulfide link is formed within the large subunit homodimers. The cofactor is Mg(2+). The disulfide bond which can form in the large chain dimeric partners within the hexadecamer appears to be associated with oxidative stress and protein turnover.

The protein resides in the plastid. It is found in the chloroplast. It catalyses the reaction 2 (2R)-3-phosphoglycerate + 2 H(+) = D-ribulose 1,5-bisphosphate + CO2 + H2O. It carries out the reaction D-ribulose 1,5-bisphosphate + O2 = 2-phosphoglycolate + (2R)-3-phosphoglycerate + 2 H(+). RuBisCO catalyzes two reactions: the carboxylation of D-ribulose 1,5-bisphosphate, the primary event in carbon dioxide fixation, as well as the oxidative fragmentation of the pentose substrate in the photorespiration process. Both reactions occur simultaneously and in competition at the same active site. The protein is Ribulose bisphosphate carboxylase large chain of Magnolia acuminata (Cucumber tree).